The following is a 293-amino-acid chain: Acetyl-coenzyme A carboxylase carboxyl transferase subunit beta (293 aa).

The CoA carboxyltransferase N-terminal domain occupies 29–293; sequence LWVKCSECSQ…GVKELAEANT (265 aa). Positions 33, 36, 52, and 55 each coordinate Zn(2+). Residues 33–55 form a C4-type zinc finger; the sequence is CSECSQVAYRKDLISNFNVCNNC.

The protein belongs to the AccD/PCCB family. Acetyl-CoA carboxylase is a heterohexamer composed of biotin carboxyl carrier protein (AccB), biotin carboxylase (AccC) and two subunits each of ACCase subunit alpha (AccA) and ACCase subunit beta (AccD). Requires Zn(2+) as cofactor.

It is found in the cytoplasm. It catalyses the reaction N(6)-carboxybiotinyl-L-lysyl-[protein] + acetyl-CoA = N(6)-biotinyl-L-lysyl-[protein] + malonyl-CoA. It participates in lipid metabolism; malonyl-CoA biosynthesis; malonyl-CoA from acetyl-CoA: step 1/1. Its function is as follows. Component of the acetyl coenzyme A carboxylase (ACC) complex. Biotin carboxylase (BC) catalyzes the carboxylation of biotin on its carrier protein (BCCP) and then the CO(2) group is transferred by the transcarboxylase to acetyl-CoA to form malonyl-CoA. The polypeptide is Acetyl-coenzyme A carboxylase carboxyl transferase subunit beta (Prochlorococcus marinus (strain AS9601)).